The primary structure comprises 312 residues: Large ribosomal subunit protein uL10 (312 aa).

The segment at 287–312 (AAAAPAAKKEEPKEESDDDMGFGLFD) is disordered.

Belongs to the universal ribosomal protein uL10 family. As to quaternary structure, P0 forms a pentameric complex by interaction with dimers of P1 and P2. Post-translationally, phosphorylated.

Ribosomal protein P0 is the functional equivalent of E.coli protein L10. This is Large ribosomal subunit protein uL10 from Caenorhabditis elegans.